Reading from the N-terminus, the 223-residue chain is Endonuclease V (223 aa).

Mg(2+)-binding residues include D35 and D103.

Belongs to the endonuclease V family. Mg(2+) is required as a cofactor.

It localises to the cytoplasm. The catalysed reaction is Endonucleolytic cleavage at apurinic or apyrimidinic sites to products with a 5'-phosphate.. DNA repair enzyme involved in the repair of deaminated bases. Selectively cleaves double-stranded DNA at the second phosphodiester bond 3' to a deoxyinosine leaving behind the intact lesion on the nicked DNA. The protein is Endonuclease V of Shigella dysenteriae serotype 1 (strain Sd197).